The chain runs to 107 residues: Ferredoxin 1 (107 aa).

2 4Fe-4S ferredoxin-type domains span residues 2-30 (TFVVTDNCIKCKYTDCVEVCPVDCFYEGP) and 31-60 (NFLVIHPDECIDCALCEPECPAQAIFSEDE). [3Fe-4S] cluster contacts are provided by Cys9 and Cys17. Positions 21, 40, 43, and 46 each coordinate [4Fe-4S] cluster. [3Fe-4S] cluster is bound at residue Cys50.

[4Fe-4S] cluster serves as cofactor. The cofactor is [3Fe-4S] cluster.

In terms of biological role, ferredoxins are iron-sulfur proteins that transfer electrons in a wide variety of metabolic reactions. This chain is Ferredoxin 1, found in Stutzerimonas stutzeri (Pseudomonas stutzeri).